The sequence spans 316 residues: L-lactate dehydrogenase 3 (316 aa).

4 residues coordinate NAD(+): Val16, Asp37, Arg42, and Tyr68. Arg91 contributes to the substrate binding site. Residues Ser104, 121–123 (ASN), and Thr146 each bind NAD(+). A substrate-binding site is contributed by 123–126 (NPVD). 151 to 154 (DSSR) lines the substrate pocket. 2 residues coordinate beta-D-fructose 1,6-bisphosphate: Arg156 and His171. Residue His178 is the Proton acceptor of the active site. Thr233 contributes to the substrate binding site.

This sequence belongs to the LDH/MDH superfamily. LDH family. As to quaternary structure, homotetramer.

It is found in the cytoplasm. The enzyme catalyses (S)-lactate + NAD(+) = pyruvate + NADH + H(+). Its pathway is fermentation; pyruvate fermentation to lactate; (S)-lactate from pyruvate: step 1/1. Allosterically activated by fructose 1,6-bisphosphate (FBP). Catalyzes the conversion of lactate to pyruvate. The sequence is that of L-lactate dehydrogenase 3 from Bacillus anthracis.